Consider the following 209-residue polypeptide: MSASKFIKCVTVGDGAVGKTCMLICYTSNKFPTDYIPTVFDNFSANVAVDGQIVNLGLWDTAGQEDYSRLRPLSYRGADIFVLAFSLISKASYENVLKKWMPELRRFAPNVPIVLVGTKLDLRDDKGYLADHTNVITSTQGEELRKQIGAAAYIECSSKTQQNVKAVFDTAIKVVLQPPRRKEVPRRRKNHRRSGCSIASIVCGGCTAA.

A GTP-binding site is contributed by 13 to 20 (GDGAVGKT). The Effector region signature appears at 35-43 (YIPTVFDNF). Residues 60–64 (DTAGQ) and 118–121 (TKLD) contribute to the GTP site. S-palmitoyl cysteine attachment occurs at residues Cys196, Cys203, and Cys206.

Belongs to the small GTPase superfamily. Rho family. Although this sequence has a C-terminal -CXXX, it is palmitoylated at Cys-206, rather than prenylated.

It localises to the membrane. Functionally, acts as a negative regulator of abscisic acid (ABA) responses. This Arabidopsis thaliana (Mouse-ear cress) protein is Rac-like GTP-binding protein ARAC7 (ARAC7).